The primary structure comprises 142 residues: Large ribosomal subunit protein mL42 (142 aa).

The N-terminal 32 residues, 1-32, are a transit peptide targeting the mitochondrion; sequence MALAAVKWAISSRTMLKHLFPVENGALYCVGH.

The protein belongs to the mitochondrion-specific ribosomal protein mL42 family. In terms of assembly, component of the mitochondrial ribosome large subunit (39S) which comprises a 16S rRNA and about 50 distinct proteins. Component of the mitochondrial ribosome small subunit (28S) which comprises a 12S rRNA and about 30 distinct proteins.

The protein localises to the mitochondrion. This is Large ribosomal subunit protein mL42 (MRPL42) from Bos taurus (Bovine).